The chain runs to 211 residues: MSEQSSSRYQQLQNEEEPGENPQASTDAPPPYSSIAGESSGLFDYKDELGFPKPPSYNVATSLPSYDEAERTKAEATIPLVPGRDDDFVARDDFDDADQLRIGNDGIFMLTFFMAFLFNWIGFFLSFCLTSSAAGRYGAISGFGLSLIKWILIVRFSTYFPGYFDGQYWLWWVFLVLGFLLFLRGFINYAKVRKMPDNFSTLPRTRVLFIY.

Residues 1–13 show a composition bias toward polar residues; the sequence is MSEQSSSRYQQLQ. A disordered region spans residues 1 to 48; the sequence is MSEQSSSRYQQLQNEEEPGENPQASTDAPPPYSSIAGESSGLFDYKDE. Residues 1-106 lie on the Cytoplasmic side of the membrane; sequence MSEQSSSRYQ…ADQLRIGNDG (106 aa). 2 short sequence motifs (PPxY motif) span residues 29–32 and 54–57; these read PPPY and PPSY. The chain crosses the membrane as a helical span at residues 107-127; that stretch reads IFMLTFFMAFLFNWIGFFLSF. Residues 128–133 lie on the Extracellular side of the membrane; that stretch reads CLTSSA. The chain crosses the membrane as a helical span at residues 134–154; it reads AGRYGAISGFGLSLIKWILIV. Over 155–162 the chain is Cytoplasmic; that stretch reads RFSTYFPG. A helical transmembrane segment spans residues 163–183; that stretch reads YFDGQYWLWWVFLVLGFLLFL. Residues 184–211 are Extracellular-facing; that stretch reads RGFINYAKVRKMPDNFSTLPRTRVLFIY.

It is found in the golgi apparatus membrane. May play a role in Golgi structure maintenance. In Xenopus tropicalis (Western clawed frog), this protein is NEDD4 family-interacting protein 1 (ndfip1).